A 500-amino-acid polypeptide reads, in one-letter code: Probable cation transporter HKT1;4 (500 aa).

Residues 1–12 (MPTSRRALAGGA) lie on the Cytoplasmic side of the membrane. A run of 2 helical transmembrane segments spans residues 13–33 (LSMH…LLGV) and 74–94 (LVVL…LVGL). The Cytoplasmic segment spans residues 95 to 156 (ASKWSKLRSD…ADTLRHNAVR (62 aa)). The interval 121 to 145 (ADIDGGDVENPTSSGEEAASRRRPM) is disordered. 2 consecutive transmembrane segments (helical) span residues 157 to 177 (ALFY…AVAV) and 239 to 259 (VLAG…AAAA). Residues 260–290 (ATRREELVEMAREGGRAAAAGYAHLMPARRC) lie on the Cytoplasmic side of the membrane. The next 2 helical transmembrane spans lie at 291 to 311 (WMLA…VCGM) and 346 to 366 (LSIL…LPPY). The Cytoplasmic portion of the chain corresponds to 367–390 (TTWFPFEENSTTKDSNAENQGIRL). A run of 2 helical transmembrane segments spans residues 391 to 411 (LEST…AICI) and 464 to 484 (GFVG…MFFG). Residues 485 to 500 (RLKKFSMKGGKAWKLS) are Cytoplasmic-facing.

Belongs to the TrkH potassium transport family. HKT (TC 2.A.38.3) subfamily.

It is found in the membrane. Functionally, probable cation transporter. May be involved in regulation of potassium-sodium homeostasis. This Oryza sativa subsp. japonica (Rice) protein is Probable cation transporter HKT1;4.